The primary structure comprises 171 residues: Shikimate kinase (171 aa).

14-19 contacts ATP; sequence GAGKST. Residue Ser-18 coordinates Mg(2+). Substrate is bound by residues Asp-36, Arg-60, and Gly-82. Arg-120 is an ATP binding site. Position 139 (Arg-139) interacts with substrate. An ATP-binding site is contributed by Gln-156.

This sequence belongs to the shikimate kinase family. As to quaternary structure, monomer. Mg(2+) is required as a cofactor.

The protein localises to the cytoplasm. The catalysed reaction is shikimate + ATP = 3-phosphoshikimate + ADP + H(+). It participates in metabolic intermediate biosynthesis; chorismate biosynthesis; chorismate from D-erythrose 4-phosphate and phosphoenolpyruvate: step 5/7. In terms of biological role, catalyzes the specific phosphorylation of the 3-hydroxyl group of shikimic acid using ATP as a cosubstrate. This Pseudoalteromonas atlantica (strain T6c / ATCC BAA-1087) protein is Shikimate kinase.